Here is a 1126-residue protein sequence, read N- to C-terminus: Formin-B (1126 aa).

The interval 1 to 21 is disordered; that stretch reads MFFKGKKKDKEKEKSHGNIGN. Residues 38 to 406 form the GBD/FH3 domain; it reads EQNLSNEDLK…LILKDPSKES (369 aa). Over residues 427 to 447 the composition is skewed to low complexity; that stretch reads LNNSNNNNNNNNSNNNNNDSN. Positions 427-462 are disordered; sequence LNNSNNNNNNNNSNNNNNDSNVSTPNINTGSPLLPP. Polar residues predominate over residues 448–462; sequence VSTPNINTGSPLLPP. Positions 463–514 form a coiled coil; that stretch reads QQYQDLEQKLQLTQNEKNESQNKVKQLESEIKGLNSTLTGLQLKVTKLEADL. Over residues 518-532 the composition is skewed to polar residues; that stretch reads SVTTPPSDTNGTTSP. Disordered regions lie at residues 518-619 and 1004-1078; these read SVTT…SVPS and ARKK…QNGT. In terms of domain architecture, FH1 spans 527-611; the sequence is NGTTSPPIEA…PGAPAVPNLP (85 aa). Residues 543-597 are compositionally biased toward pro residues; sequence GAPPPPPPPPPAPPVSGGGPPPPPPPPPPSSGGGPPPPPPPPSSGGPPPPPPPPG. Composition is skewed to low complexity over residues 598–607, 1009–1022, and 1032–1064; these read GMKKPGAPAV, AASG…SGSS, and SPIT…QQQQ. One can recognise an FH2 domain in the interval 612 to 1011; the sequence is PKKSSVPSVK…LAARKKAAAS (400 aa). A coiled-coil region spans residues 980–1010; that stretch reads KFKNEFKRTIESIQKERENVQKLAARKKAAA. One can recognise a DAD domain in the interval 1071–1100; sequence DDIPQNGTFMDQLMSKMKGGEAIRASRRAS.

This sequence belongs to the formin homology family. Diaphanous subfamily. In terms of assembly, interacts (via GBD/FH3 domain) with activated Rho-GTPases. Interacts with pfyA and pfyB.

Formins play an important role in the nucleation of actin and the formation of linear actin filaments. The protein is Formin-B (forB) of Dictyostelium discoideum (Social amoeba).